The primary structure comprises 99 residues: MSSQEKLLKTVIRPHVSDKTYGLSDANSTIVFEVARFANKQDVKNAVEKLFEVKVESVNILNVKGKARRFGRVEGRTKAWKKAYVKLAEGHDINFVGAE.

It belongs to the universal ribosomal protein uL23 family. In terms of assembly, part of the 50S ribosomal subunit. Contacts protein L29, and trigger factor when it is bound to the ribosome.

One of the early assembly proteins it binds 23S rRNA. One of the proteins that surrounds the polypeptide exit tunnel on the outside of the ribosome. Forms the main docking site for trigger factor binding to the ribosome. The sequence is that of Large ribosomal subunit protein uL23 from Francisella tularensis subsp. holarctica (strain OSU18).